The following is a 305-amino-acid chain: Methionyl-tRNA formyltransferase (305 aa).

Residue 108–111 coordinates (6S)-5,6,7,8-tetrahydrofolate; that stretch reads SLLP.

It belongs to the Fmt family.

It catalyses the reaction L-methionyl-tRNA(fMet) + (6R)-10-formyltetrahydrofolate = N-formyl-L-methionyl-tRNA(fMet) + (6S)-5,6,7,8-tetrahydrofolate + H(+). In terms of biological role, attaches a formyl group to the free amino group of methionyl-tRNA(fMet). The formyl group appears to play a dual role in the initiator identity of N-formylmethionyl-tRNA by promoting its recognition by IF2 and preventing the misappropriation of this tRNA by the elongation apparatus. The sequence is that of Methionyl-tRNA formyltransferase from Clavibacter sepedonicus (Clavibacter michiganensis subsp. sepedonicus).